Reading from the N-terminus, the 396-residue chain is 1-deoxy-D-xylulose 5-phosphate reductoisomerase (396 aa).

Thr-15, Gly-16, Ser-17, Ile-18, Gly-41, and Asn-129 together coordinate NADPH. Lys-130 is a 1-deoxy-D-xylulose 5-phosphate binding site. Glu-131 is a binding site for NADPH. Asp-155 is a binding site for Mn(2+). Ser-156, Glu-157, Ser-182, and His-205 together coordinate 1-deoxy-D-xylulose 5-phosphate. Glu-157 contacts Mn(2+). NADPH is bound at residue Gly-211. 1-deoxy-D-xylulose 5-phosphate is bound by residues Ser-218, Asn-223, Lys-224, and Glu-227. A Mn(2+)-binding site is contributed by Glu-227.

The protein belongs to the DXR family. Mg(2+) serves as cofactor. Requires Mn(2+) as cofactor.

It carries out the reaction 2-C-methyl-D-erythritol 4-phosphate + NADP(+) = 1-deoxy-D-xylulose 5-phosphate + NADPH + H(+). Its pathway is isoprenoid biosynthesis; isopentenyl diphosphate biosynthesis via DXP pathway; isopentenyl diphosphate from 1-deoxy-D-xylulose 5-phosphate: step 1/6. Catalyzes the NADPH-dependent rearrangement and reduction of 1-deoxy-D-xylulose-5-phosphate (DXP) to 2-C-methyl-D-erythritol 4-phosphate (MEP). This is 1-deoxy-D-xylulose 5-phosphate reductoisomerase from Xanthomonas campestris pv. campestris (strain B100).